A 403-amino-acid chain; its full sequence is Probable tRNA sulfurtransferase (403 aa).

In terms of domain architecture, THUMP spans 60–165 (QLAEERLKPI…KEGVFLSCRT (106 aa)). ATP is bound by residues 183 to 184 (ML), 208 to 209 (HF), Arg265, Gly287, and Gln296.

Belongs to the ThiI family.

The protein localises to the cytoplasm. It carries out the reaction [ThiI sulfur-carrier protein]-S-sulfanyl-L-cysteine + a uridine in tRNA + 2 reduced [2Fe-2S]-[ferredoxin] + ATP + H(+) = [ThiI sulfur-carrier protein]-L-cysteine + a 4-thiouridine in tRNA + 2 oxidized [2Fe-2S]-[ferredoxin] + AMP + diphosphate. It catalyses the reaction [ThiS sulfur-carrier protein]-C-terminal Gly-Gly-AMP + S-sulfanyl-L-cysteinyl-[cysteine desulfurase] + AH2 = [ThiS sulfur-carrier protein]-C-terminal-Gly-aminoethanethioate + L-cysteinyl-[cysteine desulfurase] + A + AMP + 2 H(+). It functions in the pathway cofactor biosynthesis; thiamine diphosphate biosynthesis. Functionally, catalyzes the ATP-dependent transfer of a sulfur to tRNA to produce 4-thiouridine in position 8 of tRNAs, which functions as a near-UV photosensor. Also catalyzes the transfer of sulfur to the sulfur carrier protein ThiS, forming ThiS-thiocarboxylate. This is a step in the synthesis of thiazole, in the thiamine biosynthesis pathway. The sulfur is donated as persulfide by IscS. The protein is Probable tRNA sulfurtransferase of Listeria monocytogenes serotype 4a (strain HCC23).